The primary structure comprises 287 residues: Acetylglutamate kinase (287 aa).

Substrate-binding positions include 64-65 (GG), arginine 86, and asparagine 181.

This sequence belongs to the acetylglutamate kinase family. ArgB subfamily.

The protein localises to the cytoplasm. It carries out the reaction N-acetyl-L-glutamate + ATP = N-acetyl-L-glutamyl 5-phosphate + ADP. Its pathway is amino-acid biosynthesis; L-arginine biosynthesis; N(2)-acetyl-L-ornithine from L-glutamate: step 2/4. Catalyzes the ATP-dependent phosphorylation of N-acetyl-L-glutamate. The sequence is that of Acetylglutamate kinase from Desulforamulus reducens (strain ATCC BAA-1160 / DSM 100696 / MI-1) (Desulfotomaculum reducens).